The sequence spans 572 residues: Nucleolin 1 (572 aa).

2 disordered regions span residues 1 to 312 and 488 to 572; these read MGKA…ESAT and DEAK…FGDE. Residues 7-21 are compositionally biased toward low complexity; that stretch reads KSVAVAVAPAAVPAK. A compositionally biased stretch (basic and acidic residues) spans 27-38; sequence KREAEDEIEKAV. Low complexity-rich tracts occupy residues 45–58 and 72–81; these read AAAA…PAPK and KAASSSSGSS. 7 stretches are compositionally biased toward acidic residues: residues 82-91, 109-122, 144-156, 177-191, 208-222, 235-247, and 261-276; these read SEEDSSESEE, SSDE…DDED, SESD…DEDE, DSSE…SDED, STDG…EDED, SDEE…ESSD, and ESSE…EEDE. Polar residues predominate over residues 300–311; it reads PASNQSQGTESA. RRM domains are found at residues 311–387 and 411–492; these read ATLF…LAHE and QSIF…EAKP. Composition is skewed to basic and acidic residues over residues 488-520 and 528-545; these read DEAK…DRFG and GGRD…DGGR. Polar residues predominate over residues 553–566; the sequence is QSRQSAGTASTGKK.

The protein localises to the nucleus. Its subcellular location is the nucleolus. Functionally, involved in pre-rRNA processing and ribosome assembly. In Oryza sativa subsp. japonica (Rice), this protein is Nucleolin 1.